A 563-amino-acid polypeptide reads, in one-letter code: Urocanate hydratase (563 aa).

Residues 53–54 (GG), Q131, 177–179 (GMG), E197, R202, 243–244 (NA), 264–268 (QTSAH), 274–275 (YL), and Y323 each bind NAD(+). The active site involves C411. Residue G493 coordinates NAD(+).

It belongs to the urocanase family. NAD(+) serves as cofactor.

The protein resides in the cytoplasm. The enzyme catalyses 4-imidazolone-5-propanoate = trans-urocanate + H2O. It functions in the pathway amino-acid degradation; L-histidine degradation into L-glutamate; N-formimidoyl-L-glutamate from L-histidine: step 2/3. Catalyzes the conversion of urocanate to 4-imidazolone-5-propionate. The protein is Urocanate hydratase of Yersinia enterocolitica serotype O:8 / biotype 1B (strain NCTC 13174 / 8081).